The following is a 465-amino-acid chain: UDP-glycosyltransferase TURAN (465 aa).

Topologically, residues 1–75 are cytoplasmic; it reads MGKRGRACVV…FIQYFPKILY (75 aa). A helical transmembrane segment spans residues 76-96; sequence PVTLLLKAFIQFTMLLWFLFV. At 97–465 the chain is on the lumenal side; that stretch reads KVPAPDIFLV…TQVVSQIADS (369 aa). N-linked (GlcNAc...) asparagine glycosylation is present at N238.

Belongs to the glycosyltransferase group 1 family. Glycosyltransferase 33 subfamily.

It localises to the endoplasmic reticulum membrane. It functions in the pathway protein modification; protein glycosylation. Functionally, required for pollen tube (PT) growth and integrity by affecting the stability of the pollen-specific ANX1 and ANX2 proteins. Involved in protein N-glycosylation in the endoplasmic reticulum (ER), especially in the female gametophyte. Mediates PT reception in synergids through protein glycosylation. In Arabidopsis thaliana (Mouse-ear cress), this protein is UDP-glycosyltransferase TURAN.